The following is a 333-amino-acid chain: Ribose-phosphate pyrophosphokinase (333 aa).

58–60 (DGE) contacts ATP. Positions 151 and 190 each coordinate Mg(2+). The active site involves Lys214. D-ribose 5-phosphate contacts are provided by residues Arg216, Asp240, and 244-248 (DTAGT).

It belongs to the ribose-phosphate pyrophosphokinase family. Class I subfamily. As to quaternary structure, homohexamer. Mg(2+) serves as cofactor.

The protein resides in the cytoplasm. The enzyme catalyses D-ribose 5-phosphate + ATP = 5-phospho-alpha-D-ribose 1-diphosphate + AMP + H(+). It participates in metabolic intermediate biosynthesis; 5-phospho-alpha-D-ribose 1-diphosphate biosynthesis; 5-phospho-alpha-D-ribose 1-diphosphate from D-ribose 5-phosphate (route I): step 1/1. Its function is as follows. Involved in the biosynthesis of the central metabolite phospho-alpha-D-ribosyl-1-pyrophosphate (PRPP) via the transfer of pyrophosphoryl group from ATP to 1-hydroxyl of ribose-5-phosphate (Rib-5-P). The polypeptide is Ribose-phosphate pyrophosphokinase (Synechocystis sp. (strain ATCC 27184 / PCC 6803 / Kazusa)).